The primary structure comprises 326 residues: Putative HTH-type transcriptional regulatory protein MmarC7_1702 (326 aa).

One can recognise an HTH cro/C1-type domain in the interval 128–183 (LRETREKLKISVGELAEISRVSRKTIYKYEQNEANPSAEVAIKIEEYLDVPLIKGI). The H-T-H motif DNA-binding region spans 139–158 (VGELAEISRVSRKTIYKYEQ).

In Methanococcus maripaludis (strain C7 / ATCC BAA-1331), this protein is Putative HTH-type transcriptional regulatory protein MmarC7_1702.